Consider the following 1217-residue polypeptide: MFLYNITLQRATGISHAIHGNFSGTKQQEIVVSRGKILELLRPDANTGKVHTLLTMEVFGVVRSLMAFRLTGGTKDYVVVGSDSGRIVILEYHPSKNMFEKIHQETFGKSGCRRIVPGQFLAVDPKGRAVMIGATEKQKLVYILNRDAAARLTISSPLEAHKANTLVYHVVGVDVGFENPMFACLEMDYEEADNDPTGEAAANTQQTLTFYELDLGLNHVVRKYSEALEEHGNFLITVPGGSDGPSGVLICSENYITYKNFGDQPDIRCPIPRRRNDLDDPERGMIFVCSATHKTKSMFFFLAQTEQGDIFKVTLETDEEMVTEIRMKYFDTIPVATAMCVLKTGFLFVSSEFGNHYLYQIAHLGDDDEEPEFSSAMPLEEGDTFFFQPRPLKNLVLVDEQESLSPIMSCQIADLANEDTPQLYVACGRGPRSTLRVLRHGLEVSEMAVSELPGNPNAVWTVRRHVEDEFDAYIIVSFVNATLVLSIGETVEEVTDSGFLGTTPTLSCSLLGEDALVQVYPDGIRHIRADKRVNEWKTPGKKTIIRCAVNQRQVVIALTGGELVYFEMDPSGQLNEYTERKEMSADVVCMSLANVPPGEQRSRFLAVGLVDNTVRIISLDPSDCLQPLSMQALPAQPESLCIVEMGGVEKQDELGEKGTIGFLYLNIGLQNGVLLRTVLDPVTGDLSDTRTRYLGSRPVKLFRVRMQGQEAVLAMSSRSWLSYSYQSRFHLTPLSYETLEYASGFASEQCPEGIVAISTNTLRILALEKLGAVFNQVAFPLQYTPRKFVIHPETNNLILIETDHNAYTEATKAQRKQQMAEEMVEAAGEDERELAAEMAAAFLNENLPEAIFGAPKAGSGQWASLVRLINPIQGNTLDLVQLEQNEAAFSVAICRFLNGGDDWYVLVGVARDMILNPRSVGGGYIYTYRIVGGGDKLEFLHKTPVEDVPLAIAPFQGRVLVGVGKLLRIYDLGKKKLLRKCENKHVPNLVTGIHTIGQRVIVSDVQESLFWVRYRRNENQLIIFADDTYPRWITTACLLDYDTMASADKFGNICVVRLPPNTSDDVDEDPTGNKALWDRGLLNGASQKAEIIINYHIGETVLSLQKTTLIPGGSESLVYTTLSGGIGILVPFTSHEDHDFFQHLEMHMRSEFPPLCGRDHLSFRSYYFPVKNVIDGDLCEQFNSMDPHKQKSVSEELDRTPPEVSKKLEDIRTRYAF.

Belongs to the RSE1 family. In terms of assembly, component of the 17S U2 SnRNP complex, a ribonucleoprotein complex that contains small nuclear RNA (snRNA) U2 and a number of specific proteins. Part of the SF3B subcomplex of the 17S U2 SnRNP complex. SF3B associates with the splicing subcomplex SF3A and a 12S RNA unit to form the U2 small nuclear ribonucleoproteins complex (U2 snRNP). Component of the minor (U12-type spliceosome) spliceosome.

It is found in the nucleus. Its function is as follows. Component of the 17S U2 SnRNP complex of the spliceosome, a large ribonucleoprotein complex that removes introns from transcribed pre-mRNAs. The 17S U2 SnRNP complex (1) directly participates in early spliceosome assembly and (2) mediates recognition of the intron branch site during pre-mRNA splicing by promoting the selection of the pre-mRNA branch-site adenosine, the nucleophile for the first step of splicing. Within the 17S U2 SnRNP complex, SF3B3 is part of the SF3B subcomplex, which is required for 'A' complex assembly formed by the stable binding of U2 snRNP to the branchpoint sequence in pre-mRNA. Also acts as a component of the minor spliceosome, which is involved in the splicing of U12-type introns in pre-mRNAs. This Danio rerio (Zebrafish) protein is Splicing factor 3B subunit 3 (sf3b3).